The primary structure comprises 372 residues: MRIVVKVGTSTLTYENGKLNLEIMEKLVRQIANLLNRGEEVVLVTSGAIGAGMGKLNLKEKPKTIPEKQSLAAIGQGLLIEIYEKFFNEYGKITAQVLLTKEDFSDRRRYLNVSYTLSNLLKWGVVPIINENDTVTVDEIKIGDNDTLAALLASLVEADILIILTDIDGLYDKDPRIYKEAKIIEVVEEFSDELFKIAGSAGTKRGTGGMYTKIQAAKICWNSGVKMIIANGKIDNVLNQIANGEKIGTTFLPMKKPISSRKVWIAFNAKVSGRLFIDEGAAKAIIKHGKSLLPSGVVKTEGDYDVGDCVAVVDHQEKEIARGLINYSSEEVEKIKGCKTHEIEKILGYKYYDEVIHRDNLVILERGEKFGS.

Lysine 6 lines the ATP pocket. Serine 46, aspartate 133, and asparagine 145 together coordinate substrate. Residues 165–166 and 207–213 contribute to the ATP site; these read TD and TGGMYTK. A PUA domain is found at 272–350; sequence SGRLFIDEGA…HEIEKILGYK (79 aa).

The protein belongs to the glutamate 5-kinase family.

The protein resides in the cytoplasm. The catalysed reaction is L-glutamate + ATP = L-glutamyl 5-phosphate + ADP. It functions in the pathway amino-acid biosynthesis; L-proline biosynthesis; L-glutamate 5-semialdehyde from L-glutamate: step 1/2. Catalyzes the transfer of a phosphate group to glutamate to form L-glutamate 5-phosphate. The sequence is that of Glutamate 5-kinase from Thermoanaerobacter pseudethanolicus (strain ATCC 33223 / 39E) (Clostridium thermohydrosulfuricum).